The sequence spans 126 residues: Small ribosomal subunit protein uS13 (126 aa).

A disordered region spans residues 95 to 126 (NLPVHGQRTHTNARTRKGPRRAIAGKKKAGKK).

The protein belongs to the universal ribosomal protein uS13 family. Part of the 30S ribosomal subunit. Forms a loose heterodimer with protein S19. Forms two bridges to the 50S subunit in the 70S ribosome.

Located at the top of the head of the 30S subunit, it contacts several helices of the 16S rRNA. In the 70S ribosome it contacts the 23S rRNA (bridge B1a) and protein L5 of the 50S subunit (bridge B1b), connecting the 2 subunits; these bridges are implicated in subunit movement. Contacts the tRNAs in the A and P-sites. This is Small ribosomal subunit protein uS13 from Frankia casuarinae (strain DSM 45818 / CECT 9043 / HFP020203 / CcI3).